Consider the following 463-residue polypeptide: L-seryl-tRNA(Sec) selenium transferase (463 aa).

Lys-295 carries the N6-(pyridoxal phosphate)lysine modification.

The protein belongs to the SelA family. In terms of assembly, homodecamer; pentamer of dimers. Binds only one seryl-tRNA(Sec) per dimer. The cofactor is pyridoxal 5'-phosphate.

The protein localises to the cytoplasm. It carries out the reaction L-seryl-tRNA(Sec) + selenophosphate + H(+) = L-selenocysteinyl-tRNA(Sec) + phosphate. It functions in the pathway aminoacyl-tRNA biosynthesis; selenocysteinyl-tRNA(Sec) biosynthesis; selenocysteinyl-tRNA(Sec) from L-seryl-tRNA(Sec) (bacterial route): step 1/1. Converts seryl-tRNA(Sec) to selenocysteinyl-tRNA(Sec) required for selenoprotein biosynthesis. The polypeptide is L-seryl-tRNA(Sec) selenium transferase (Escherichia coli O7:K1 (strain IAI39 / ExPEC)).